A 313-amino-acid polypeptide reads, in one-letter code: Foldase protein PrsA (313 aa).

The signal sequence occupies residues 1 to 20 (MKKKLLAGAITLLSVATLAA). Cys-21 is lipidated: N-palmitoyl cysteine. Cys-21 is lipidated: S-diacylglycerol cysteine. The region spanning 143 to 241 (TPDVTAQIIR…SQYYIVKLTK (99 aa)) is the PpiC domain.

This sequence belongs to the PrsA family.

The protein localises to the cell membrane. The catalysed reaction is [protein]-peptidylproline (omega=180) = [protein]-peptidylproline (omega=0). Its function is as follows. Plays a major role in protein secretion by helping the post-translocational extracellular folding of several secreted proteins. In Streptococcus pneumoniae serotype 4 (strain ATCC BAA-334 / TIGR4), this protein is Foldase protein PrsA.